Reading from the N-terminus, the 39-residue chain is Photosystem II reaction center protein J (39 aa).

The helical transmembrane segment at 7–27 (IPLWIVAVVVGLGVVTVVGLF) threads the bilayer.

Belongs to the PsbJ family. In terms of assembly, PSII is composed of 1 copy each of membrane proteins PsbA, PsbB, PsbC, PsbD, PsbE, PsbF, PsbH, PsbI, PsbJ, PsbK, PsbL, PsbM, PsbT, PsbX, PsbY, PsbZ, Psb30/Ycf12, peripheral proteins PsbO, CyanoQ (PsbQ), PsbU, PsbV and a large number of cofactors. It forms dimeric complexes.

The protein resides in the cellular thylakoid membrane. One of the components of the core complex of photosystem II (PSII). PSII is a light-driven water:plastoquinone oxidoreductase that uses light energy to abstract electrons from H(2)O, generating O(2) and a proton gradient subsequently used for ATP formation. It consists of a core antenna complex that captures photons, and an electron transfer chain that converts photonic excitation into a charge separation. The chain is Photosystem II reaction center protein J from Synechococcus sp. (strain JA-3-3Ab) (Cyanobacteria bacterium Yellowstone A-Prime).